Reading from the N-terminus, the 401-residue chain is Probable trafficking protein particle complex subunit 13 homolog (401 aa).

Belongs to the TRAPPC13 family.

This chain is Probable trafficking protein particle complex subunit 13 homolog, found in Caenorhabditis elegans.